Consider the following 264-residue polypeptide: DNA-binding HTH-type transcriptional repressor TrmBL2 (264 aa).

A coiled-coil region spans residues 81–113 (LEKFIEEWQERVKEELEAKKKAKEELIELMKPL).

The protein belongs to the transcriptional regulator TrmB family.

It is found in the cytoplasm. The protein localises to the chromosome. Functionally, an abundant chromosomal protein that seems to be involved in both genome architecture and transcription repression. Incubation with DNA in vitro gives fibrous structures 14.2 +/- 2.1 nm in thickness (naked DNA is 1.83 +/- 0.37 nm); does not significantly compact DNA. Binds to both coding and non-coding regions; binding within gene promoters correlates with decreased transcript levels, while binding within coding regions does not. The chain is DNA-binding HTH-type transcriptional repressor TrmBL2 from Thermococcus kodakarensis (strain ATCC BAA-918 / JCM 12380 / KOD1) (Pyrococcus kodakaraensis (strain KOD1)).